A 136-amino-acid polypeptide reads, in one-letter code: Transcription antitermination protein NusB (136 aa).

This sequence belongs to the NusB family.

Functionally, involved in transcription antitermination. Required for transcription of ribosomal RNA (rRNA) genes. Binds specifically to the boxA antiterminator sequence of the ribosomal RNA (rrn) operons. This is Transcription antitermination protein NusB from Pseudoalteromonas translucida (strain TAC 125).